Consider the following 318-residue polypeptide: NAD kinase (318 aa).

Aspartate 80 functions as the Proton acceptor in the catalytic mechanism. NAD(+) contacts are provided by residues 80–81, arginine 85, 155–156, aspartate 185, and 196–201; these read DG, NE, and TAYAFS.

Belongs to the NAD kinase family. It depends on a divalent metal cation as a cofactor.

It localises to the cytoplasm. It catalyses the reaction NAD(+) + ATP = ADP + NADP(+) + H(+). In terms of biological role, involved in the regulation of the intracellular balance of NAD and NADP, and is a key enzyme in the biosynthesis of NADP. Catalyzes specifically the phosphorylation on 2'-hydroxyl of the adenosine moiety of NAD to yield NADP. This chain is NAD kinase, found in Corynebacterium efficiens (strain DSM 44549 / YS-314 / AJ 12310 / JCM 11189 / NBRC 100395).